The chain runs to 276 residues: Formamidopyrimidine-DNA glycosylase (276 aa).

The active-site Schiff-base intermediate with DNA is P2. E3 acts as the Proton donor in catalysis. K58 serves as the catalytic Proton donor; for beta-elimination activity. Residues H92, R111, and K154 each contribute to the DNA site. Residues 239–273 (QVYGHAGEECNNCGTILEKIKVNGRGTTFCPHCQV) form an FPG-type zinc finger. The active-site Proton donor; for delta-elimination activity is R263.

The protein belongs to the FPG family. As to quaternary structure, monomer. Zn(2+) serves as cofactor.

It carries out the reaction Hydrolysis of DNA containing ring-opened 7-methylguanine residues, releasing 2,6-diamino-4-hydroxy-5-(N-methyl)formamidopyrimidine.. It catalyses the reaction 2'-deoxyribonucleotide-(2'-deoxyribose 5'-phosphate)-2'-deoxyribonucleotide-DNA = a 3'-end 2'-deoxyribonucleotide-(2,3-dehydro-2,3-deoxyribose 5'-phosphate)-DNA + a 5'-end 5'-phospho-2'-deoxyribonucleoside-DNA + H(+). Its function is as follows. Involved in base excision repair of DNA damaged by oxidation or by mutagenic agents. Acts as a DNA glycosylase that recognizes and removes damaged bases. Has a preference for oxidized purines, such as 7,8-dihydro-8-oxoguanine (8-oxoG). Has AP (apurinic/apyrimidinic) lyase activity and introduces nicks in the DNA strand. Cleaves the DNA backbone by beta-delta elimination to generate a single-strand break at the site of the removed base with both 3'- and 5'-phosphates. This chain is Formamidopyrimidine-DNA glycosylase, found in Lactobacillus johnsonii (strain CNCM I-12250 / La1 / NCC 533).